The chain runs to 354 residues: Serine/threonine-protein kinase ppk34 (354 aa).

Positions 40–331 (YRLKNMLGYG…IEELLRDPFL (292 aa)) constitute a Protein kinase domain. ATP is bound by residues 46–54 (LGYGACSTV) and Lys-69. The active-site Proton acceptor is the Asp-200.

It belongs to the protein kinase superfamily. Ser/Thr protein kinase family.

The protein resides in the cytoplasm. It is found in the nucleus. It carries out the reaction L-seryl-[protein] + ATP = O-phospho-L-seryl-[protein] + ADP + H(+). The catalysed reaction is L-threonyl-[protein] + ATP = O-phospho-L-threonyl-[protein] + ADP + H(+). This is Serine/threonine-protein kinase ppk34 (ppk34) from Schizosaccharomyces pombe (strain 972 / ATCC 24843) (Fission yeast).